A 79-amino-acid polypeptide reads, in one-letter code: UPF0154 protein SAK_1616 (79 aa).

The chain crosses the membrane as a helical span at residues 5–25 (IWILLIIVALFGGLVGGIFIA).

The protein belongs to the UPF0154 family.

It localises to the cell membrane. The chain is UPF0154 protein SAK_1616 from Streptococcus agalactiae serotype Ia (strain ATCC 27591 / A909 / CDC SS700).